We begin with the raw amino-acid sequence, 297 residues long: Protein COFACTOR ASSEMBLY OF COMPLEX C SUBUNIT B CCB4, chloroplastic (297 aa).

The transit peptide at 1–33 directs the protein to the chloroplast; sequence MEARIILLRIQIPWSANRQFSHPPLDFPRFIRA. The Stromal segment spans residues 34-70; sequence SSSSTSQKPKTYEGPKPRKNLVADFISKNDDLVRSLP. A helical transmembrane segment spans residues 71-91; it reads IYVGGASLLAVLFNRTVSGIA. The Lumenal portion of the chain corresponds to 92–103; that stretch reads PVADASSSQSRA. The chain crosses the membrane as a helical span at residues 104 to 124; sequence DLLALGLAVTNLLTGLVWLSI. Residues 125–297 are Stromal-facing; that stretch reads RPKSITPVNP…DSDEISRVTV (173 aa).

It is found in the plastid. The protein resides in the chloroplast thylakoid membrane. Functionally, required for the biogenesis and accumulation of native cytochrome b6 in the thylakoid membrane. Controls the conversion of apocytochrome b6 to holocytochrome b6. Required for covalent binding of the c-type heme to cytochrome b6. In Arabidopsis thaliana (Mouse-ear cress), this protein is Protein COFACTOR ASSEMBLY OF COMPLEX C SUBUNIT B CCB4, chloroplastic.